Reading from the N-terminus, the 90-residue chain is Cell division protein CrgA (90 aa).

Residues 1–25 (MPKARVTKNETAPVSSNPSANRTPV) are disordered. Positions 9–22 (NETAPVSSNPSANR) are enriched in polar residues. A run of 2 helical transmembrane segments spans residues 38-58 (VIMF…YLVG) and 67-87 (LGAW…LMTM).

Belongs to the CrgA family.

The protein resides in the cell membrane. Functionally, involved in cell division. This chain is Cell division protein CrgA, found in Corynebacterium glutamicum (strain ATCC 13032 / DSM 20300 / JCM 1318 / BCRC 11384 / CCUG 27702 / LMG 3730 / NBRC 12168 / NCIMB 10025 / NRRL B-2784 / 534).